Here is a 440-residue protein sequence, read N- to C-terminus: Putative sodium-coupled neutral amino acid transporter 8 (440 aa).

11 helical membrane passes run 29–49 (AIFI…PWAF), 58–78 (AIMV…ILGY), 100–120 (IGKL…VAFL), 156–176 (FAIT…KEIS), 183–203 (ILGT…YYVM), 223–243 (MFSV…CVTI), 255–275 (WAAV…FTGI), 300–320 (VIIA…IILL), 350–370 (VVIT…VPDI), 373–393 (VISV…GLCL), and 418–438 (VVCG…EIIA).

It belongs to the amino acid/polyamine transporter 2 family.

It is found in the membrane. Its function is as follows. Putative sodium-dependent amino acid/proton antiporter. This Xenopus tropicalis (Western clawed frog) protein is Putative sodium-coupled neutral amino acid transporter 8 (slc38a8).